The chain runs to 317 residues: Small ribosomal subunit protein RACK1 (317 aa).

7 WD repeats span residues 13-44 (GHSG…IMWK), 61-91 (GHSH…RLWD), 103-133 (GHTK…KLWN), 146-178 (SHTE…KVWN), 190-220 (GHTG…MLWD), 231-260 (DGGD…KIWD), and 281-311 (AEPP…RVWQ).

It belongs to the WD repeat G protein beta family. Ribosomal protein RACK1 subfamily.

The protein resides in the cytoplasm. Functionally, involved in the recruitment, assembly and/or regulation of a variety of signaling molecules. Interacts with a wide variety of proteins and plays a role in many cellular processes. Required for VANGL2 membrane localization, inhibits Wnt signaling and regulates cellular polarization and oriented cell division during gastrulation. The polypeptide is Small ribosomal subunit protein RACK1 (gnb2l1) (Danio rerio (Zebrafish)).